The primary structure comprises 93 residues: Large ribosomal subunit protein uL23cz/uL23cy (93 aa).

Belongs to the universal ribosomal protein uL23 family. In terms of assembly, part of the 50S ribosomal subunit.

The protein resides in the plastid. The protein localises to the chloroplast. Binds to 23S rRNA. The sequence is that of Large ribosomal subunit protein uL23cz/uL23cy (rpl23-A) from Atropa belladonna (Belladonna).